The chain runs to 996 residues: KK-1 biosynthesis cluster protein D (996 aa).

Disordered stretches follow at residues 307–333 (HDTD…PELD), 425–449 (EQDN…ARDL), 489–556 (AGVA…ALRA), and 571–602 (STHS…SLHS). Composition is skewed to polar residues over residues 318-329 (PIRSNKLSQSKQ) and 428-439 (NQTNEEGTGEVQ). Basic and acidic residues-rich tracts occupy residues 440-449 (SQRDRRARDL) and 500-527 (RAAE…DKAA). A compositionally biased stretch (polar residues) spans 572-590 (THSIHQRASVNTTAPTVAR).

The protein operates within secondary metabolite biosynthesis. In terms of biological role, part of the gene cluster that mediates the biosynthesis of KK-1, a novel cyclic depsipeptide with 10 residues which is a promising active compound with high activity against many plant pathogens, especially Botrytis cinerea. The role of kk1D in KK-1 biosynthesis has still to be determined. The nonribosomal peptide synthetase (NRPS) kk1B catalyzes the elongation and cyclization of the decapeptide chain composed of 1 D-lactic acid residue (D-Lac), 1 pipecolic acid residue (Pip), 1 aspartic acid residue (Asp), 1 isoleucine residue (Ile), 1 glycine residue (Gly), 1 tyrosine residue (Tyr) and 4 valine residues (Val). The Asp, Ile and 3 Val residues are N-methylated by the 5 methyltransferase domains from the NRPS (found in modules 3, 5, 6, 7 and 9), whereas the Tyr residue is O-methylated by the cluster encoded O-methyltransferase kk1A. The thioesterase kk1J is likely to be involved in the corrective mechanism of peptide chain synthesis. The D-lactate dehydrogenase kk1H is involved in the synthesis of D-lactic acid from pyruvic acid, which is recognized by the A domain of the first kk1B module. The pyrroline-5-carboxylate reductase kk1I is involved in the synthesis of the L-pipecolic acid residue of KK-1 from delta-1-pyrroline-5-carboxylate (P5C), a metabolic intermediate of lysine. It is still unclear how kk1C and kk1D are involved in the production of KK-1. In Curvularia clavata, this protein is KK-1 biosynthesis cluster protein D.